The chain runs to 133 residues: ATP synthase epsilon chain (133 aa).

Residues 103-133 are disordered; it reads VSQMEGQEPSTEKIKAQQNFNRARARVQATK.

The protein belongs to the ATPase epsilon chain family. In terms of assembly, F-type ATPases have 2 components, CF(1) - the catalytic core - and CF(0) - the membrane proton channel. CF(1) has five subunits: alpha(3), beta(3), gamma(1), delta(1), epsilon(1). CF(0) has three main subunits: a, b and c.

The protein localises to the cellular thylakoid membrane. Functionally, produces ATP from ADP in the presence of a proton gradient across the membrane. This is ATP synthase epsilon chain from Prochlorococcus marinus (strain MIT 9313).